A 95-amino-acid chain; its full sequence is Small ribosomal subunit protein uS19 (95 aa).

It belongs to the universal ribosomal protein uS19 family.

Functionally, protein S19 forms a complex with S13 that binds strongly to the 16S ribosomal RNA. This Clostridium kluyveri (strain NBRC 12016) protein is Small ribosomal subunit protein uS19.